The primary structure comprises 503 residues: Ell-associated factor Eaf (503 aa).

2 stretches are compositionally biased toward polar residues: residues 119 to 145 (TRNE…NQGA) and 167 to 186 (ENST…SRRN). Disordered regions lie at residues 119 to 220 (TRNE…PAWD), 250 to 360 (GHAN…SQSV), and 372 to 503 (GGVL…DDDD). Position 196 is a phosphoserine (S196). Residues 202–215 (SPSRPVPVHRSPQS) show a composition bias toward low complexity. 2 stretches are compositionally biased toward polar residues: residues 250 to 273 (GHAN…STHI) and 298 to 307 (MAQQQQQHPS). The segment covering 308–337 (NYGRGYNGGHNHAQQQQQQQRNSPPRQRPS) has biased composition (low complexity). A compositionally biased stretch (acidic residues) spans 385 to 400 (DSSDSDSGSDSDDSTE). 3 stretches are compositionally biased toward low complexity: residues 406–437 (QGQQ…HHNQ), 454–472 (HQQQ…QKQQ), and 487–497 (LQNDLQLSSNS).

It belongs to the EAF family.

Its subcellular location is the nucleus. Functionally, promotes transcriptional elongation by Su(Tpl)/ELL. Essential for development. The polypeptide is Ell-associated factor Eaf (Drosophila sechellia (Fruit fly)).